A 611-amino-acid chain; its full sequence is MEIFKEEEEEAFSAIEGIIYACEVYDPVPRHLHKSKTKIINAAKLIIETHLSYYTILNNISDIQAYLSTWLRDLGTTGSYQTILSESISLMFDRTVSIFRKCTIEGGFPHLIARLYLRLKSYQKLLSDAGLKIFFSSYDYAFGAAYNLVNCSEYRYDEVHYISNGTYSLVASMKIDPAEVIKREHFRLTIPKFNISNILIEIFHLLDGLAFFKVNPDSLSISTASAETIFHSISEGNHQVLELGRSLMFPLLKTGDFEICRIDDAGAVITFTEAKDVKLEIISLDEVSWVMQWKSCLQNYERKAANDSSFIKTHLQFKKANNFNEDNNGLGLIVDRNIPTDDFMLASTNRQSPPPSNTGCSLHRSKPLHIPLSSVIREDFYDSSLNERISKDGDSSCESFSGAESILSDYDFHDNEFFNNQSPHYFSEHIDNNSREVVITDENTIISLENTQVSRWSNYSWQKISPHQLQVSIIQLRMGNFIVAYNSDHNLHQFKIRLCDDIKCIQSTEQDIQIRVPLGAIMCSVTGILNIRTKDADKLLRVLSFYTTDHTEAVSHSNNQDATASPLSSVSSAMDLKHSLQKCSSTIMPQELTQDVIGSKSDLISNIRQKI.

Belongs to the UPF0508 family.

The protein is UPF0508 protein SCY_3114 of Saccharomyces cerevisiae (strain YJM789) (Baker's yeast).